The chain runs to 117 residues: UPF0125 protein VV0820 (117 aa).

The disordered stretch occupies residues 90 to 117 (RKRAEQAKESGAADPVTGGKPSPLRKAD).

This sequence belongs to the UPF0125 (RnfH) family.

The sequence is that of UPF0125 protein VV0820 from Vibrio vulnificus (strain YJ016).